Consider the following 337-residue polypeptide: Ketol-acid reductoisomerase (NADP(+)) (337 aa).

The region spanning Ala-2–Thr-182 is the KARI N-terminal Rossmann domain. Residues Tyr-25–Gln-28, Ser-51, Ser-53, and Asp-83–Gln-86 contribute to the NADP(+) site. Residue His-108 is part of the active site. An NADP(+)-binding site is contributed by Gly-134. The KARI C-terminal knotted domain occupies Thr-183–Ile-328. Mg(2+)-binding residues include Asp-191, Glu-195, Glu-227, and Glu-231. Position 252 (Ser-252) interacts with substrate.

This sequence belongs to the ketol-acid reductoisomerase family. The cofactor is Mg(2+).

It catalyses the reaction (2R)-2,3-dihydroxy-3-methylbutanoate + NADP(+) = (2S)-2-acetolactate + NADPH + H(+). It carries out the reaction (2R,3R)-2,3-dihydroxy-3-methylpentanoate + NADP(+) = (S)-2-ethyl-2-hydroxy-3-oxobutanoate + NADPH + H(+). Its pathway is amino-acid biosynthesis; L-isoleucine biosynthesis; L-isoleucine from 2-oxobutanoate: step 2/4. It participates in amino-acid biosynthesis; L-valine biosynthesis; L-valine from pyruvate: step 2/4. Its function is as follows. Involved in the biosynthesis of branched-chain amino acids (BCAA). Catalyzes an alkyl-migration followed by a ketol-acid reduction of (S)-2-acetolactate (S2AL) to yield (R)-2,3-dihydroxy-isovalerate. In the isomerase reaction, S2AL is rearranged via a Mg-dependent methyl migration to produce 3-hydroxy-3-methyl-2-ketobutyrate (HMKB). In the reductase reaction, this 2-ketoacid undergoes a metal-dependent reduction by NADPH to yield (R)-2,3-dihydroxy-isovalerate. The sequence is that of Ketol-acid reductoisomerase (NADP(+)) from Sorangium cellulosum (strain So ce56) (Polyangium cellulosum (strain So ce56)).